The primary structure comprises 212 residues: Protein-L-isoaspartate O-methyltransferase (212 aa).

Residue Ser-61 is part of the active site.

It belongs to the methyltransferase superfamily. L-isoaspartyl/D-aspartyl protein methyltransferase family.

It is found in the cytoplasm. It catalyses the reaction [protein]-L-isoaspartate + S-adenosyl-L-methionine = [protein]-L-isoaspartate alpha-methyl ester + S-adenosyl-L-homocysteine. Functionally, catalyzes the methyl esterification of L-isoaspartyl residues in peptides and proteins that result from spontaneous decomposition of normal L-aspartyl and L-asparaginyl residues. It plays a role in the repair and/or degradation of damaged proteins. The polypeptide is Protein-L-isoaspartate O-methyltransferase (Pseudoalteromonas atlantica (strain T6c / ATCC BAA-1087)).